The chain runs to 479 residues: HSPB1-associated protein 1 (479 aa).

A disordered region spans residues 1–25 (MEAGCEGSSPQTLGERTMGEEGERV). Residues 88–208 (ETECSYVDAT…EDTPFLYPTR (121 aa)) are interaction with HSPB1. In terms of domain architecture, JmjC spans 124-288 (WAYADYKYFV…HLARVEEAVT (165 aa)). Positions 347-412 (PRANGEEPGV…GDSQECTSRN (66 aa)) are disordered. Over residues 356–369 (VQEHMEVEQARDPS) the composition is skewed to basic and acidic residues.

Interacts with CRYAB and HSPB1. Widely expressed. Highly expressed by Sertoli cells in testis (at protein level).

The protein resides in the cytoplasm. In terms of biological role, may play a role in cellular stress response. This chain is HSPB1-associated protein 1 (Hspbap1), found in Rattus norvegicus (Rat).